The following is a 298-amino-acid chain: tRNA dimethylallyltransferase (298 aa).

16-23 (GPTASGKS) is an ATP binding site. 18 to 23 (TASGKS) serves as a coordination point for substrate. Interaction with substrate tRNA regions lie at residues 41–44 (DSMQ) and 165–169 (QRIVR).

It belongs to the IPP transferase family. As to quaternary structure, monomer. Mg(2+) is required as a cofactor.

The catalysed reaction is adenosine(37) in tRNA + dimethylallyl diphosphate = N(6)-dimethylallyladenosine(37) in tRNA + diphosphate. In terms of biological role, catalyzes the transfer of a dimethylallyl group onto the adenine at position 37 in tRNAs that read codons beginning with uridine, leading to the formation of N6-(dimethylallyl)adenosine (i(6)A). In Rhizobium radiobacter (Agrobacterium tumefaciens), this protein is tRNA dimethylallyltransferase.